Here is a 936-residue protein sequence, read N- to C-terminus: Protein NLP2 (936 aa).

Positions 99 to 130 (IMSVNPTEAEKTGKSSGELGSDDGAHQGSSMV) are disordered. Residues 550–635 (QPSSIGHAEK…INSVHGVDRS (86 aa)) enclose the RWP-RK domain. Disordered regions lie at residues 666-697 (PSVG…SCQL), 753-782 (CTNP…IQQE), and 794-827 (DKDH…RSAL). Positions 671-682 (TVEENSDLKSEE) are enriched in basic and acidic residues. A compositionally biased stretch (polar residues) spans 688–697 (DGSQRQSCQL). A compositionally biased stretch (low complexity) spans 754 to 769 (TNPSSSLRPSSESTRN). Residues 770–781 (QIVGRNSPSIQQ) are compositionally biased toward polar residues. Residues 801 to 815 (STSGMTDSSSGSASS) show a composition bias toward low complexity. Residues 816–825 (HPTFKQNTRS) are compositionally biased toward polar residues. Positions 834-916 (ALTVKATYNG…RIVKLQVRDL (83 aa)) constitute a PB1 domain.

It is found in the nucleus. Probable transcription factor. The polypeptide is Protein NLP2 (Oryza sativa subsp. japonica (Rice)).